Consider the following 155-residue polypeptide: SsrA-binding protein (155 aa).

This sequence belongs to the SmpB family.

The protein localises to the cytoplasm. Its function is as follows. Required for rescue of stalled ribosomes mediated by trans-translation. Binds to transfer-messenger RNA (tmRNA), required for stable association of tmRNA with ribosomes. tmRNA and SmpB together mimic tRNA shape, replacing the anticodon stem-loop with SmpB. tmRNA is encoded by the ssrA gene; the 2 termini fold to resemble tRNA(Ala) and it encodes a 'tag peptide', a short internal open reading frame. During trans-translation Ala-aminoacylated tmRNA acts like a tRNA, entering the A-site of stalled ribosomes, displacing the stalled mRNA. The ribosome then switches to translate the ORF on the tmRNA; the nascent peptide is terminated with the 'tag peptide' encoded by the tmRNA and targeted for degradation. The ribosome is freed to recommence translation, which seems to be the essential function of trans-translation. The chain is SsrA-binding protein from Moorella thermoacetica (strain ATCC 39073 / JCM 9320).